Consider the following 449-residue polypeptide: N-succinylarginine dihydrolase (449 aa).

Substrate is bound by residues 19–28 (GGLSYGNVAS), Asn110, and 137–138 (HR). The segment at 23 to 43 (YGNVASQSNSQQGSNPREAAR) is disordered. The segment covering 25–37 (NVASQSNSQQGSN) has biased composition (polar residues). Residue Glu174 is part of the active site. Position 214 (Arg214) interacts with substrate. Residue His250 is part of the active site. Substrate-binding residues include Asp252 and Asn365. Catalysis depends on Cys371, which acts as the Nucleophile.

The protein belongs to the succinylarginine dihydrolase family. Homodimer.

It carries out the reaction N(2)-succinyl-L-arginine + 2 H2O + 2 H(+) = N(2)-succinyl-L-ornithine + 2 NH4(+) + CO2. Its pathway is amino-acid degradation; L-arginine degradation via AST pathway; L-glutamate and succinate from L-arginine: step 2/5. In terms of biological role, catalyzes the hydrolysis of N(2)-succinylarginine into N(2)-succinylornithine, ammonia and CO(2). This chain is N-succinylarginine dihydrolase, found in Pseudomonas putida (strain GB-1).